A 28-amino-acid polypeptide reads, in one-letter code: Grammistin Gs A (28 aa).

This sequence belongs to the grammistin family. Group 3 subfamily. In terms of assembly, exists as aggregates of 3-4 molecules. Expressed by the skin glands.

It is found in the secreted. Thanks to its amphiphilic alpha-helice(s), it may integrate into membrane phospholipids, leading to lysis of the membrane. Has no substantial hemolytic activity. Has antibacterial activity with a broad spectrum against various species of bacteria including both Gram-positive and Gram-negative groups. The polypeptide is Grammistin Gs A (Grammistes sexlineatus (Goldenstriped soapfish)).